The following is a 157-amino-acid chain: S-ribosylhomocysteine lyase (157 aa).

Residues H54, H58, and C124 each coordinate Fe cation.

This sequence belongs to the LuxS family. As to quaternary structure, homodimer. It depends on Fe cation as a cofactor.

It carries out the reaction S-(5-deoxy-D-ribos-5-yl)-L-homocysteine = (S)-4,5-dihydroxypentane-2,3-dione + L-homocysteine. In terms of biological role, involved in the synthesis of autoinducer 2 (AI-2) which is secreted by bacteria and is used to communicate both the cell density and the metabolic potential of the environment. The regulation of gene expression in response to changes in cell density is called quorum sensing. Catalyzes the transformation of S-ribosylhomocysteine (RHC) to homocysteine (HC) and 4,5-dihydroxy-2,3-pentadione (DPD). In Lacticaseibacillus paracasei (strain ATCC 334 / BCRC 17002 / CCUG 31169 / CIP 107868 / KCTC 3260 / NRRL B-441) (Lactobacillus paracasei), this protein is S-ribosylhomocysteine lyase.